A 375-amino-acid chain; its full sequence is Chanoclavine-I aldehyde reductase ifgG (375 aa).

FMN is bound by residues 31-33 (PTT), alanine 66, glutamine 108, and histidine 176. Substrate-binding residues include histidine 176 and asparagine 179. The active-site Proton donor is the tyrosine 181. FMN-binding positions include lysine 228, glycine 300, 325–326 (GR), and arginine 326. Tyrosine 353 provides a ligand contact to substrate.

This sequence belongs to the NADH:flavin oxidoreductase/NADH oxidase family. It depends on FMN as a cofactor.

It carries out the reaction dihydrochanoclavine-I aldehyde + NADP(+) = chanoclavine-I aldehyde + NADPH + H(+). It functions in the pathway alkaloid biosynthesis; ergot alkaloid biosynthesis. Its function is as follows. Chanoclavine-I aldehyde reductase; part of the gene cluster that mediates the biosynthesis of isofumigaclavines, fungal ergot alkaloids. The tryptophan dimethylallyltransferase ifgA catalyzes the first step of ergot alkaloid biosynthesis by condensing dimethylallyl diphosphate (DMAP) and tryptophan to form 4-dimethylallyl-L-tryptophan. The second step is catalyzed by the methyltransferase ifgB that methylates 4-dimethylallyl-L-tryptophan in the presence of S-adenosyl-L-methionine, resulting in the formation of N-methyl-dimethylallyl-L-tryptophan. The catalase ifgD and the FAD-dependent oxidoreductase ifgC then transform N-methyl-dimethylallyl-L-tryptophan to chanoclavine-I which is further oxidized by ifgE in the presence of NAD(+), resulting in the formation of chanoclavine-I aldehyde. The chanoclavine-I aldehyde reductases ifgG and/or fgaOx3 reduce chanoclavine-I aldehyde to dihydrochanoclavine-I aldehyde that spontaneously dehydrates to form 6,8-dimethyl-6,7-didehydroergoline. The festuclavine dehydrogenases ifgF1 and/or ifgF2 then catalyze the reduction of 6,8-dimethyl-6,7-didehydroergoline to form festuclavine. Hydrolysis of festuclavine by a yet undetermined cytochrome P450 monooxygenase (called ifgH) then leads to the formation of isofumigaclavine B which is in turn acetylated by ifgI to isofumigaclavine A. Penicillium roqueforti has interestingly at least two sets of genes for the consumption of chanoclavine-I aldehyde on three different loci, the OYEs ifgG/fgaOx3 and the festuclavine synthase homologs ifgF1/ifgF2. The reason for the duplication of these genes is unclear, probably to ensure the conversion of chanoclavine-I aldehyde by differential gene expression under various environmental conditions. The protein is Chanoclavine-I aldehyde reductase ifgG of Penicillium roqueforti (strain FM164).